The following is a 201-amino-acid chain: ATP-dependent Clp protease proteolytic subunit 2 (201 aa).

Ser101 serves as the catalytic Nucleophile. His126 is an active-site residue.

The protein belongs to the peptidase S14 family. As to quaternary structure, fourteen ClpP subunits assemble into 2 heptameric rings which stack back to back to give a disk-like structure with a central cavity, resembling the structure of eukaryotic proteasomes.

Its subcellular location is the cytoplasm. The catalysed reaction is Hydrolysis of proteins to small peptides in the presence of ATP and magnesium. alpha-casein is the usual test substrate. In the absence of ATP, only oligopeptides shorter than five residues are hydrolyzed (such as succinyl-Leu-Tyr-|-NHMec, and Leu-Tyr-Leu-|-Tyr-Trp, in which cleavage of the -Tyr-|-Leu- and -Tyr-|-Trp bonds also occurs).. Cleaves peptides in various proteins in a process that requires ATP hydrolysis. Has a chymotrypsin-like activity. Plays a major role in the degradation of misfolded proteins. The polypeptide is ATP-dependent Clp protease proteolytic subunit 2 (Prochlorococcus marinus subsp. pastoris (strain CCMP1986 / NIES-2087 / MED4)).